The chain runs to 252 residues: Thiamine thiazole synthase (252 aa).

Residues serine 35, 54 to 55 (EK), glycine 62, valine 126, and 152 to 154 (HVD) contribute to the NAD(+) site. The Fe cation site is built by aspartate 154 and histidine 169. Methionine 217 lines the NAD(+) pocket. Arginine 227 lines the glycine pocket.

Belongs to the THI4 family. As to quaternary structure, homooctamer; tetramer of dimers. Requires Fe(2+) as cofactor.

The enzyme catalyses hydrogen sulfide + glycine + NAD(+) = ADP-5-ethyl-4-methylthiazole-2-carboxylate + nicotinamide + 3 H2O + H(+). Its pathway is cofactor biosynthesis; thiamine diphosphate biosynthesis. Functionally, involved in the biosynthesis of the thiazole moiety of thiamine. Catalyzes the conversion of NAD and glycine to adenosine diphosphate 5-(2-hydroxyethyl)-4-methylthiazole-2-carboxylate (ADT), an adenylated thiazole intermediate, using free sulfide as a source of sulfur. This is Thiamine thiazole synthase from Pyrococcus horikoshii (strain ATCC 700860 / DSM 12428 / JCM 9974 / NBRC 100139 / OT-3).